The primary structure comprises 546 residues: CCA tRNA nucleotidyltransferase, mitochondrial (546 aa).

This sequence belongs to the tRNA nucleotidyltransferase/poly(A) polymerase family.

The protein resides in the mitochondrion. It is found in the cytoplasm. It localises to the nucleus. It carries out the reaction a tRNA precursor + 2 CTP + ATP = a tRNA with a 3' CCA end + 3 diphosphate. Its function is as follows. Nucleotidyltransferase that catalyzes the addition and repair of the essential 3'-terminal CCA sequence in tRNAs, which is necessary for the attachment of amino acids to the 3' terminus of tRNA molecules, using CTP and ATP as substrates. tRNA 3'-terminal CCA addition is required both for tRNA processing and repair. Also involved in tRNA surveillance by mediating tandem CCA addition to generate a CCACCA at the 3' terminus of unstable tRNAs. While stable tRNAs receive only 3'-terminal CCA, unstable tRNAs are marked with CCACCA and rapidly degraded. The structural flexibility of RNA controls the choice between CCA versus CCACCA addition: following the first CCA addition cycle, nucleotide-binding to the active site triggers a clockwise screw motion, producing torque on the RNA. This ejects stable RNAs, whereas unstable RNAs are refolded while bound to the enzyme and subjected to a second CCA catalytic cycle. The chain is CCA tRNA nucleotidyltransferase, mitochondrial (CCA1) from Saccharomyces cerevisiae (strain ATCC 204508 / S288c) (Baker's yeast).